The primary structure comprises 38 residues: Large ribosomal subunit protein bL36 (38 aa).

It belongs to the bacterial ribosomal protein bL36 family.

This is Large ribosomal subunit protein bL36 from Cupriavidus metallidurans (strain ATCC 43123 / DSM 2839 / NBRC 102507 / CH34) (Ralstonia metallidurans).